The chain runs to 252 residues: 2-C-methyl-D-erythritol 4-phosphate cytidylyltransferase (252 aa).

It belongs to the IspD/TarI cytidylyltransferase family. IspD subfamily.

It catalyses the reaction 2-C-methyl-D-erythritol 4-phosphate + CTP + H(+) = 4-CDP-2-C-methyl-D-erythritol + diphosphate. Its pathway is isoprenoid biosynthesis; isopentenyl diphosphate biosynthesis via DXP pathway; isopentenyl diphosphate from 1-deoxy-D-xylulose 5-phosphate: step 2/6. Catalyzes the formation of 4-diphosphocytidyl-2-C-methyl-D-erythritol from CTP and 2-C-methyl-D-erythritol 4-phosphate (MEP). This is 2-C-methyl-D-erythritol 4-phosphate cytidylyltransferase from Chlorobium phaeobacteroides (strain BS1).